A 475-amino-acid polypeptide reads, in one-letter code: Dihydrolipoyl dehydrogenase (475 aa).

Residues 37 to 46 (EQYYSLGGVC), Lys55, and Ala118 contribute to the FAD site. Residues Cys46 and Cys51 are joined by a disulfide bond. Residues 183 to 187 (GGGII), Asp206, Val239, and 272 to 275 (AIGR) contribute to the NAD(+) site. Residues Asp315 and Ala323 each coordinate FAD. His447 acts as the Proton acceptor in catalysis.

This sequence belongs to the class-I pyridine nucleotide-disulfide oxidoreductase family. In terms of assembly, homodimer. FAD is required as a cofactor.

It localises to the cytoplasm. It carries out the reaction N(6)-[(R)-dihydrolipoyl]-L-lysyl-[protein] + NAD(+) = N(6)-[(R)-lipoyl]-L-lysyl-[protein] + NADH + H(+). Lipoamide dehydrogenase is a component of the alpha-ketoacid dehydrogenase complexes. The chain is Dihydrolipoyl dehydrogenase (lpdA) from Buchnera aphidicola subsp. Baizongia pistaciae (strain Bp).